A 147-amino-acid polypeptide reads, in one-letter code: Hemoglobin subunit beta-1 (147 aa).

A Globin domain is found at 3-147 (HWTDFERSTI…VVFSLGKQYH (145 aa)). Heme b contacts are provided by H64 and H93.

Belongs to the globin family. Hb1 is a heterotetramer of two alpha-1 chains and two beta-1 chains. In terms of tissue distribution, red blood cells.

Involved in oxygen transport from gills to the various peripheral tissues. This is Hemoglobin subunit beta-1 from Liparis tunicatus (Kelp snailfish).